The sequence spans 171 residues: Co-chaperone protein HscB (171 aa).

Residues 2-74 (DYFTLFGLPA…LTRAEYLLSL (73 aa)) form the J domain.

The protein belongs to the HscB family. Interacts with HscA and stimulates its ATPase activity. Interacts with IscU.

Functionally, co-chaperone involved in the maturation of iron-sulfur cluster-containing proteins. Seems to help targeting proteins to be folded toward HscA. The polypeptide is Co-chaperone protein HscB (Salmonella agona (strain SL483)).